Reading from the N-terminus, the 402-residue chain is Dihydrolipoyllysine-residue acetyltransferase component of pyruvate dehydrogenase complex (402 aa).

One can recognise a Lipoyl-binding domain in the interval 1-69 (MPDIGLEEVE…KTSSIIMIFK (69 aa)). Position 35 is an N6-lipoyllysine (K35). A Peripheral subunit-binding (PSBD) domain is found at 109-146 (HATPVVRRLARHLNVDLKNITPSGPKNRILKEDIELYI). H375 is a catalytic residue.

It belongs to the 2-oxoacid dehydrogenase family. Forms a 24-polypeptide structural core with octahedral symmetry. Requires (R)-lipoate as cofactor.

The catalysed reaction is N(6)-[(R)-dihydrolipoyl]-L-lysyl-[protein] + acetyl-CoA = N(6)-[(R)-S(8)-acetyldihydrolipoyl]-L-lysyl-[protein] + CoA. Functionally, the pyruvate dehydrogenase complex catalyzes the overall conversion of pyruvate to acetyl-CoA and CO(2). It contains multiple copies of three enzymatic components: pyruvate dehydrogenase (E1), dihydrolipoamide acetyltransferase (E2) and lipoamide dehydrogenase (E3). The sequence is that of Dihydrolipoyllysine-residue acetyltransferase component of pyruvate dehydrogenase complex (aceF) from Buchnera aphidicola subsp. Schizaphis graminum (strain Sg).